Consider the following 139-residue polypeptide: MSRRTAREASMKLVFQMAFNDDHVDEVGAEDILAQAKEELNYNNYQYIETVVSRTESNLQKIDEYIEKFSENWKIDRLSKVDLSILRLAISEILFFDDIPTRVSINEAVELAKKFSTDKASGYINGILDQVANQLNKAR.

This sequence belongs to the NusB family.

Involved in transcription antitermination. Required for transcription of ribosomal RNA (rRNA) genes. Binds specifically to the boxA antiterminator sequence of the ribosomal RNA (rrn) operons. This is Transcription antitermination protein NusB from Natranaerobius thermophilus (strain ATCC BAA-1301 / DSM 18059 / JW/NM-WN-LF).